The primary structure comprises 326 residues: MISTEEKIEFLKRLVEIYSPTGKENGVAKFLIKSFENYGIEAYLDDVGNVIAVKKGKGPLILLAGHMDTVPGYIPVRIENGELWGRGAVDAKGPLATFFFATIESDANIIFAGLVDEEGFSKGAKNLEVPKPDYIIVGEPSGTNGVTIGYKGSLTVKFTETVEKVHGSIGVGAAEKLIEKWLTIAKYFGEGFNSLSGRIVKFVAYEREFDFFGEMIVNLRTPPGYMPPKEWDIIDFVPAYEVSRTSPLVRAFVRAIRKAGYKPKLKKKTGTADTNILGPKYGVDAIAYGPGDSKLDHTPYERIKLREYLEAIEILKNAILELSSND.

Position 66 (H66) interacts with Zn(2+). Residue D68 is part of the active site. Position 90 (D90) interacts with Zn(2+). Catalysis depends on E117, which acts as the Proton acceptor. 3 residues coordinate Zn(2+): E118, E139, and H297.

This sequence belongs to the peptidase M20A family. LysK subfamily. Zn(2+) serves as cofactor. It depends on Co(2+) as a cofactor.

Its subcellular location is the cytoplasm. It catalyses the reaction [amino-group carrier protein]-C-terminal-gamma-(L-lysyl)-L-glutamate + H2O = [amino-group carrier protein]-C-terminal-L-glutamate + L-lysine. It carries out the reaction [amino-group carrier protein]-C-terminal-gamma-(L-ornithyl)-L-glutamate + H2O = [amino-group carrier protein]-C-terminal-L-glutamate + L-ornithine. It participates in amino-acid biosynthesis; L-lysine biosynthesis via AAA pathway; L-lysine from L-alpha-aminoadipate (Thermus route): step 5/5. It functions in the pathway amino-acid biosynthesis; L-arginine biosynthesis. Functionally, catalyzes the release of L-lysine from [LysW]-gamma-L-lysine and the release of L-ornithine from [LysW]-L-ornithine. This chain is Putative [LysW]-lysine/[LysW]-ornithine hydrolase, found in Pyrococcus furiosus (strain ATCC 43587 / DSM 3638 / JCM 8422 / Vc1).